The following is a 661-amino-acid chain: Polyadenylate-binding protein, cytoplasmic and nuclear (661 aa).

Residues 1 to 11 (MSAAETNQVQE) show a composition bias toward polar residues. A disordered region spans residues 1 to 61 (MSAAETNQVQ…SAEEQGESSG (61 aa)). Residues 20 to 51 (SSSSPAAGGATTATTTNNAESSDATSSSVPAD) are compositionally biased toward low complexity. 4 RRM domains span residues 67 to 145 (ASLY…WSQR), 155 to 232 (GNIF…KHVS), 248 to 325 (TNIY…RAQK), and 351 to 428 (VNLF…LAQR). The tract at residues 473-563 (FPPNGRGNAP…PNRPAGGNVP (91 aa)) is disordered. Residues 501 to 511 (EQWPRPGPNGQ) show a composition bias toward pro residues. Residues 523–532 (QDFNGQNMRP) are compositionally biased toward polar residues. The span at 533-549 (QQQQQQQQQQQQQQQQQ) shows a compositional bias: low complexity. Residues 563-644 (PAKDLAALIA…ALNAFEEYKN (82 aa)) form the PABC domain.

The protein belongs to the polyadenylate-binding protein type-1 family.

The protein localises to the cytoplasm. The protein resides in the nucleus. Functionally, binds the poly(A) tail of mRNA. Appears to be an important mediator of the multiple roles of the poly(A) tail in mRNA biogenesis, stability and translation. In the nucleus, involved in both mRNA cleavage and polyadenylation. Is also required for efficient mRNA export to the cytoplasm. Acts in concert with a poly(A)-specific nuclease (PAN) to affect poly(A) tail shortening, which may occur concomitantly with either nucleocytoplasmic mRNA transport or translational initiation. In the cytoplasm, stimulates translation initiation and regulates mRNA decay through translation termination-coupled poly(A) shortening, probably mediated by PAN. This chain is Polyadenylate-binding protein, cytoplasmic and nuclear (PAB1), found in Lodderomyces elongisporus (strain ATCC 11503 / CBS 2605 / JCM 1781 / NBRC 1676 / NRRL YB-4239) (Yeast).